Consider the following 224-residue polypeptide: uncharacterized protein (224 aa).

Residues Gln108–Glu137 adopt a coiled-coil conformation.

This is an uncharacterized protein from Human picobirnavirus (strain Human/Thailand/Hy005102/-) (PBV).